Reading from the N-terminus, the 356-residue chain is Dual-specificity RNA methyltransferase RlmN (356 aa).

The active-site Proton acceptor is the Glu-92. Residues 98 to 327 (EKNRGTLCIS…HQGIRTMTRR (230 aa)) form the Radical SAM core domain. An intrachain disulfide couples Cys-105 to Cys-337. Cys-112, Cys-116, and Cys-119 together coordinate [4Fe-4S] cluster. S-adenosyl-L-methionine-binding positions include 162 to 163 (GE), Ser-194, 216 to 218 (SLH), and Asn-294. The active-site S-methylcysteine intermediate is the Cys-337.

The protein belongs to the radical SAM superfamily. RlmN family. The cofactor is [4Fe-4S] cluster.

It is found in the cytoplasm. The catalysed reaction is adenosine(2503) in 23S rRNA + 2 reduced [2Fe-2S]-[ferredoxin] + 2 S-adenosyl-L-methionine = 2-methyladenosine(2503) in 23S rRNA + 5'-deoxyadenosine + L-methionine + 2 oxidized [2Fe-2S]-[ferredoxin] + S-adenosyl-L-homocysteine. The enzyme catalyses adenosine(37) in tRNA + 2 reduced [2Fe-2S]-[ferredoxin] + 2 S-adenosyl-L-methionine = 2-methyladenosine(37) in tRNA + 5'-deoxyadenosine + L-methionine + 2 oxidized [2Fe-2S]-[ferredoxin] + S-adenosyl-L-homocysteine. Specifically methylates position 2 of adenine 2503 in 23S rRNA and position 2 of adenine 37 in tRNAs. m2A2503 modification seems to play a crucial role in the proofreading step occurring at the peptidyl transferase center and thus would serve to optimize ribosomal fidelity. In Ruthia magnifica subsp. Calyptogena magnifica, this protein is Dual-specificity RNA methyltransferase RlmN.